We begin with the raw amino-acid sequence, 388 residues long: Mycinamicin VIII C21 methyl hydroxylase (388 aa).

Heme is bound by residues His87, Arg91, Arg279, His335, and Cys337.

The protein belongs to the cytochrome P450 family. The cofactor is heme.

It functions in the pathway antibiotic biosynthesis; mycinamicin biosynthesis. Functionally, involved in the biosynthesis of mycinamicin, a 16-membered macrolide antibiotic. Catalyzes hydroxylation at the C21 methyl group of mycinamicin VIII, the earliest macrolide form in the postpolyketide synthase tailoring pathway, leading to mycinamicin VII. Uses ferredoxin MycCII in electron transfer for catalysis. The polypeptide is Mycinamicin VIII C21 methyl hydroxylase (Micromonospora griseorubida).